A 316-amino-acid chain; its full sequence is HPr kinase/phosphorylase (316 aa).

Catalysis depends on residues histidine 143 and lysine 164. An ATP-binding site is contributed by 158 to 165; sequence GEAGSGKS. Serine 165 is a Mg(2+) binding site. The active-site Proton acceptor; for phosphorylation activity. Proton donor; for dephosphorylation activity is aspartate 182. The interval 206 to 215 is important for the catalytic mechanism of both phosphorylation and dephosphorylation; the sequence is LEVRGLGVLN. Glutamate 207 lines the Mg(2+) pocket. Arginine 251 is an active-site residue. An important for the catalytic mechanism of dephosphorylation region spans residues 272–277; that stretch reads PVMPGR.

The protein belongs to the HPrK/P family. As to quaternary structure, homohexamer. It depends on Mg(2+) as a cofactor.

It carries out the reaction [HPr protein]-L-serine + ATP = [HPr protein]-O-phospho-L-serine + ADP + H(+). The catalysed reaction is [HPr protein]-O-phospho-L-serine + phosphate + H(+) = [HPr protein]-L-serine + diphosphate. Catalyzes the ATP- as well as the pyrophosphate-dependent phosphorylation of a specific serine residue in HPr, a phosphocarrier protein of the phosphoenolpyruvate-dependent sugar phosphotransferase system (PTS). HprK/P also catalyzes the pyrophosphate-producing, inorganic phosphate-dependent dephosphorylation (phosphorolysis) of seryl-phosphorylated HPr (P-Ser-HPr). This Xanthomonas euvesicatoria pv. vesicatoria (strain 85-10) (Xanthomonas campestris pv. vesicatoria) protein is HPr kinase/phosphorylase.